Reading from the N-terminus, the 369-residue chain is Probable trehalose-phosphate phosphatase D (369 aa).

The tract at residues 63–85 (RASSPTRTRPGNISPLPESDEED) is disordered.

The protein belongs to the trehalose phosphatase family. It depends on a divalent metal cation as a cofactor.

It catalyses the reaction alpha,alpha-trehalose 6-phosphate + H2O = alpha,alpha-trehalose + phosphate. The protein operates within glycan biosynthesis; trehalose biosynthesis. Its function is as follows. Removes the phosphate from trehalose 6-phosphate to produce free trehalose. Trehalose accumulation in plant may improve abiotic stress tolerance. This chain is Probable trehalose-phosphate phosphatase D (TPPD), found in Arabidopsis thaliana (Mouse-ear cress).